The sequence spans 185 residues: Ribosome-recycling factor (185 aa).

This sequence belongs to the RRF family.

Its subcellular location is the cytoplasm. Functionally, responsible for the release of ribosomes from messenger RNA at the termination of protein biosynthesis. May increase the efficiency of translation by recycling ribosomes from one round of translation to another. In Actinobacillus succinogenes (strain ATCC 55618 / DSM 22257 / CCUG 43843 / 130Z), this protein is Ribosome-recycling factor.